A 453-amino-acid polypeptide reads, in one-letter code: MKMKYFHHPSGLLPRLLLLLLLTMGAVACTKEDNPDQPTSDEVATVKMSLDDVEMRGGDLYSGEDLIKKVRIFVFREGLNGLWVLDKQKLFASGQSDFQNPFTISAHAGPRQIYVIANEPDALTTKLDKILFKKELEDMQAPDVNEPIVRPFTMTGMATATLNPQGTVQANISLNRIAAKITLDIKQVTPGSDVIKITKVQILRNAKNSRLLEGTNKPTGYWNWANACDLPLTNNGSAQSIIQASAPLYVYENIGSDSDSSGRATQLVVEALYNGIKTRYYAYVNDKTTTANHHYSIRRNHHYKLDGTITKMGEFSSLLLTTTVLPWTVENLDYGFLVPYVAEINPHAVITQDNVVTFENSLSFTVRIKGRDGSRWKATLDNGLEFGFDSGSAIDGAADGTTVYTIKVKALKPNGIGIQRRTNLFFTVDGKKVILDKNINPQPTDIKIIQQGL.

The signal sequence occupies residues 1-28; sequence MKMKYFHHPSGLLPRLLLLLLLTMGAVA. A lipid anchor (N-palmitoyl cysteine) is attached at Cys-29. Cys-29 is lipidated: S-diacylglycerol cysteine. Residues 29–56 constitute a propeptide that is removed on maturation; that stretch reads CTKEDNPDQPTSDEVATVKMSLDDVEMR.

Belongs to the bacteroidetes fimbrillin superfamily. FimA/Mfa1 family. As to quaternary structure, fimbriae are composed of a major, structural subunit and the minor components FimC, FimD and FimE. Identified in a complex composed of FimC, FimD and FimE (in vitro). The complex interacts with host extracellular matrix proteins, including fibronectin and type I collagen. Interacts with host CXCR4.

The protein resides in the fimbrium. Its subcellular location is the cell outer membrane. Functionally, minor component of fimbriae. These long, filamentous pili are attached to the cell surface; they mediate biofilm formation, adhesion onto host cells and onto other bacteria that are part of the oral microbiome. They play an important role in invasion of periodontal tissues and are major virulence factors. FimC, FimD and FimE contribute to interaction with host CXCR4 and thereby down-regulate the TLR2-mediated host immune response. This Porphyromonas gingivalis (strain ATCC 33277 / DSM 20709 / CIP 103683 / JCM 12257 / NCTC 11834 / 2561) protein is Major fimbrium subunit FimC.